A 347-amino-acid chain; its full sequence is Quinolinate synthase (347 aa).

Residues His47 and Ser68 each coordinate iminosuccinate. Cys113 serves as a coordination point for [4Fe-4S] cluster. Residues 139–141 and Ser156 each bind iminosuccinate; that span reads YAN. Position 200 (Cys200) interacts with [4Fe-4S] cluster. Residues 226–228 and Thr243 contribute to the iminosuccinate site; that span reads HPE. [4Fe-4S] cluster is bound at residue Cys297.

This sequence belongs to the quinolinate synthase family. Type 1 subfamily. Requires [4Fe-4S] cluster as cofactor.

It is found in the cytoplasm. It catalyses the reaction iminosuccinate + dihydroxyacetone phosphate = quinolinate + phosphate + 2 H2O + H(+). Its pathway is cofactor biosynthesis; NAD(+) biosynthesis; quinolinate from iminoaspartate: step 1/1. In terms of biological role, catalyzes the condensation of iminoaspartate with dihydroxyacetone phosphate to form quinolinate. This Shigella flexneri serotype 5b (strain 8401) protein is Quinolinate synthase.